Here is a 1066-residue protein sequence, read N- to C-terminus: Microtubule-associated protein 1S (1066 aa).

A necessary for the microtubule-organizing center localization region spans residues 1–804 (MAATVAGSGA…SESLPTLSDS (804 aa)). Residues Ser320 and Ser472 each carry the phosphoserine modification. A disordered region spans residues 462–707 (QDMAGPRRAE…EVDESLSVSF (246 aa)). Basic and acidic residues-rich tracts occupy residues 466 to 487 (GPRRAESKESVASRDSLRREGR) and 500 to 530 (GVARKDSPRTEAPRRAEKEARPSREVKKDPR). Ser582 carries the post-translational modification Phosphoserine. Positions 597–614 (ACSSPAPQLVATPSQESS) are enriched in polar residues. Thr647 is subject to Phosphothreonine. Ser649, Ser660, Ser665, Ser667, Ser737, and Ser765 each carry phosphoserine. Residues 656–671 (GPTESSGPLSLSPLRG) show a composition bias toward low complexity. The necessary for interaction with RASSF1 stretch occupies residues 676-1066 (PDASPTVTTP…EAFPACKVEF (391 aa)). The necessary for association with microtubules stretch occupies residues 720–973 (EAGLSLPLCG…GGSARLVDEE (254 aa)). Positions 758-950 (PMAPAPVSPG…SRSGGSAAPP (193 aa)) are disordered. Polar residues-rich tracts occupy residues 766–775 (PGSSNDSSAR) and 790–803 (PPTSVSESLPTLSD). Ser816 carries the phosphoserine modification. Pro residues predominate over residues 832–845 (PDPLKIPPPLPTPP). Low complexity-rich tracts occupy residues 880–894 (TTPPKATPVTAAKIK) and 933–949 (RGPSGSAGSRSGGSAAP). The segment at 967-1066 (ARLVDEEFFR…EAFPACKVEF (100 aa)) is necessary for association with actin. The tract at residues 974 to 998 (FFRRVRALCYVISGQDQHKEEGMRA) is necessary for the mitochondrial aggregation and genome destruction.

Belongs to the MAP1 family. In terms of assembly, heterodimer of a heavy and a light chain. Interacts with microtubules and actin. Both MAP1S heavy and light chains interact with microtubules. MAP1S light chain interacts with actin. Interacts (via C-terminus) with GAN (via Kelch domains). Interacts with ESR1, LRPPRC, RASSF1, microtubules and VCY2. Interacts with ESR1, LRPPRC, RASSF1, microtubules and VCY2. Interacts with WDR47 (via N-terminus of light chain).

Its subcellular location is the nucleus. It is found in the cytoplasm. The protein resides in the cytosol. It localises to the cytoskeleton. The protein localises to the spindle. Its function is as follows. Microtubule-associated protein that mediates aggregation of mitochondria resulting in cell death and genomic destruction (MAGD). Plays a role in anchoring the microtubule organizing center to the centrosomes. Binds to DNA. Plays a role in apoptosis. Involved in the formation of microtubule bundles. In Bos taurus (Bovine), this protein is Microtubule-associated protein 1S (MAP1S).